The sequence spans 540 residues: uncharacterized protein (540 aa).

Residues 1 to 61 are Cytoplasmic-facing; sequence MFSIFKKKTS…TNDSPWQDPT (61 aa). A helical transmembrane segment spans residues 62–82; that stretch reads YFSSFGKELMFIATCMLAQLL. At 83-108 the chain is on the extracellular side; sequence NQAGQTHALCIMNVLSKSFNSEANNQ. The chain crosses the membrane as a helical span at residues 109-129; sequence AWLMASFPLAAGSFILISGRL. Over 130 to 131 the chain is Cytoplasmic; it reads GD. A helical membrane pass occupies residues 132–152; sequence IYGLKKMLIVGYVIVIVWSII. At 153-169 the chain is on the extracellular side; the sequence is SGLSKYSNSDAFFITSR. A helical membrane pass occupies residues 170 to 190; sequence AFQGVGIAFILPNIMGLVGHV. The Cytoplasmic segment spans residues 191–203; that stretch reads YKVGSFRKNIVIS. The chain crosses the membrane as a helical span at residues 204–224; it reads FIGACAPTGGMFGGLFGGLIV. Residues 225–232 are Extracellular-facing; it reads TEDPNQWP. Residues 233–253 traverse the membrane as a helical segment; the sequence is WVFYAFGIATFLSLLMAWYSI. The Cytoplasmic segment spans residues 254–272; that stretch reads PNNVPTNIHGLSMDWTGSA. The chain crosses the membrane as a helical span at residues 273 to 293; that stretch reads LAIIGLILFNFVWNQAPIVGW. The Extracellular portion of the chain corresponds to 294-295; it reads DK. A helical transmembrane segment spans residues 296 to 316; sequence PYIIVLLIISVIFLVAFFVYE. Residues 317–334 are Cytoplasmic-facing; the sequence is SKYAEVPLLPRAMTKNRH. The chain crosses the membrane as a helical span at residues 335–355; sequence MIMILLAVFLGWGSFGIWTFY. The Extracellular portion of the chain corresponds to 356–372; sequence YVSFQLNLRHYSPVWTG. Residues 373-393 traverse the membrane as a helical segment; sequence GTYFVFVIFGSMAAFFVAFSI. The Cytoplasmic portion of the chain corresponds to 394-398; the sequence is KRLGP. Residues 399 to 419 traverse the membrane as a helical segment; sequence ALLLCFSLMAFDAGSIMFSVL. The Extracellular segment spans residues 420–429; the sequence is PVEQSYWKLN. Residues 430–450 traverse the membrane as a helical segment; it reads FAMQAILCFGMDLSFPASSII. Topologically, residues 451–461 are cytoplasmic; that stretch reads LSDGLPMQYQG. A helical transmembrane segment spans residues 462 to 482; that stretch reads MAGSLVNTVINYSASLCLGMG. The Extracellular segment spans residues 483–502; that stretch reads GTVEHQINKSGNDLLKGYRA. A helical transmembrane segment spans residues 503–523; it reads AVYLGVGLASLGVVISVTYML. At 524–540 the chain is on the cytoplasmic side; the sequence is ENLWNRHRKSEDRSLEA.

Belongs to the major facilitator superfamily.

It localises to the membrane. This is an uncharacterized protein from Saccharomyces cerevisiae (strain ATCC 204508 / S288c) (Baker's yeast).